The sequence spans 313 residues: Calcyphosin-2 (313 aa).

EF-hand domains follow at residues 144–179, 180–215, and 216–251; these read RILT…FHLE, VSEK…EMNE, and YRKS…KKHS. Ca(2+) is bound by residues Asp-193, Asn-195, Asn-197, Lys-199, and Glu-204.

The sequence is that of Calcyphosin-2 (CAPS2) from Macaca fascicularis (Crab-eating macaque).